Reading from the N-terminus, the 156-residue chain is Small ribosomal subunit protein uS7 (156 aa).

It belongs to the universal ribosomal protein uS7 family. As to quaternary structure, part of the 30S ribosomal subunit. Contacts proteins S9 and S11.

Functionally, one of the primary rRNA binding proteins, it binds directly to 16S rRNA where it nucleates assembly of the head domain of the 30S subunit. Is located at the subunit interface close to the decoding center, probably blocks exit of the E-site tRNA. The sequence is that of Small ribosomal subunit protein uS7 from Psychromonas ingrahamii (strain DSM 17664 / CCUG 51855 / 37).